A 553-amino-acid polypeptide reads, in one-letter code: Formate--tetrahydrofolate ligase (553 aa).

56 to 63 (TPKGEGKT) contacts ATP.

Belongs to the formate--tetrahydrofolate ligase family.

The catalysed reaction is (6S)-5,6,7,8-tetrahydrofolate + formate + ATP = (6R)-10-formyltetrahydrofolate + ADP + phosphate. It functions in the pathway one-carbon metabolism; tetrahydrofolate interconversion. In Haloarcula marismortui (strain ATCC 43049 / DSM 3752 / JCM 8966 / VKM B-1809) (Halobacterium marismortui), this protein is Formate--tetrahydrofolate ligase.